Consider the following 558-residue polypeptide: NXPE family member 2 (558 aa).

The helical transmembrane segment at 17-37 threads the bilayer; sequence ASARKLFLIVLIIFVFWVVFM.

It belongs to the NXPE family.

Its subcellular location is the membrane. This chain is NXPE family member 2 (Nxpe2), found in Mus musculus (Mouse).